We begin with the raw amino-acid sequence, 37 residues long: MKVRPSVKPICEKCKVIKRKGKVMIICENPKHKQRQG.

The protein belongs to the bacterial ribosomal protein bL36 family.

The protein is Large ribosomal subunit protein bL36 of Staphylococcus carnosus (strain TM300).